Reading from the N-terminus, the 268-residue chain is Protein CDV3 homolog (268 aa).

Over residues 40–50 the composition is skewed to basic and acidic residues; the sequence is KREVVKPKKPE. Disordered regions lie at residues 40–145 and 184–268; these read KREV…ERVG and QQAG…DEAS. The span at 51-61 shows a compositional bias: low complexity; that stretch reads AAAGGVAVVGE. The span at 76-85 shows a compositional bias: acidic residues; that stretch reads VEEEWKEFEE. Over residues 98–107 the composition is skewed to polar residues; it reads QLSTITAQES. The segment covering 123 to 132 has biased composition (acidic residues); it reads NYDEDDEDSN. Basic and acidic residues predominate over residues 221–239; the sequence is RPEEQRKKKNEPAFEEVRH.

This sequence belongs to the CDV3 family.

The protein is Protein CDV3 homolog of Drosophila yakuba (Fruit fly).